Consider the following 384-residue polypeptide: Monomeric sarcosine oxidase (384 aa).

6–36 contributes to the FAD binding site; that stretch reads DVIVIGLGGMGSAAAHHLSARGARVLGLEKF. The residue at position 315 (C315) is an S-8alpha-FAD cysteine.

It belongs to the MSOX/MTOX family. MSOX subfamily. As to quaternary structure, monomer. The cofactor is FAD.

Its subcellular location is the cytoplasm. It carries out the reaction sarcosine + O2 + H2O = formaldehyde + glycine + H2O2. Functionally, catalyzes the oxidative demethylation of sarcosine. The sequence is that of Monomeric sarcosine oxidase from Streptomyces avermitilis (strain ATCC 31267 / DSM 46492 / JCM 5070 / NBRC 14893 / NCIMB 12804 / NRRL 8165 / MA-4680).